The sequence spans 62 residues: Delta-theraphotoxin-Cg1a 1 (62 aa).

The N-terminal stretch at 1–21 (MKTSILFVIFSLALLFALSAA) is a signal peptide. The propeptide occupies 22–29 (TEIEETDR). Intrachain disulfides connect Cys31-Cys46, Cys38-Cys51, and Cys45-Cys58.

This sequence belongs to the neurotoxin 10 (Hwtx-1) family. 33 (Jztx-1) subfamily. Expressed by the venom gland.

Its subcellular location is the secreted. In terms of biological role, inhibits voltage-gated sodium channels, preferentially subtype Nav1.5/SCN5A (in cardiac myocytes), but also Nav1.6/SCN8A and Nav1.7/SCN9A (TTX-sensitive Nav in rat DRG neurons) and invertebrate Nav (in insect neurons) as well as voltage-gated potassium channels of the subtype Kv2.1/KCNB1. Is suggested to bind to site 3 of the sodium channels and inhibit the inactivation of the activated channels, thereby blocking neuronal transmission. On potassium channels, inhibits activation of channels with an IC(50) of 8.05 uM through a voltage sensor-trapping mechanism. Increases muscle contraction in several assays (mouse phrenic nerve-diaphragm, toad heart, rat vas deferens) and is suggested to act both presynaptically and postsynaptically. Its function is as follows. Moderately inhibits voltage-gated sodium channels and weakly inhibits voltage-gated potassium channel. Inhibits the inactivation of rat Nav1.2/SCN2A (IC(50)=870 nM), rat Nav1.3/SCN3A (IC(50)=845 nM), rat Nav1.4/SCN4A (IC(50)=339 nM), human Nav1.5/SCN5A (IC(50)=335 nM) and human Nav1.7/SCN9A sodium channels (IC(50)=348 nM). The toxin delays the inactivation of sodium channels without affecting the activation and steady-state inactivation kinetics in the physiological range of voltages. Site-directed mutagenesis of the sodium channel indicates that the toxin interacts with site 3 located at the extracellular S3-S4 linker of domain IV. On potassium channels, it inhibits activation of channels with an IC(50) of 8.05 uM through a voltage sensor-trapping mechanism. It increases muscle contraction in several assays (mouse phrenic nerve-diaphragm, toad heart, rat vas deferens) and is suggested to act both presynaptically and postsynaptically. The chain is Delta-theraphotoxin-Cg1a 1 from Chilobrachys guangxiensis (Chinese earth tiger tarantula).